We begin with the raw amino-acid sequence, 196 residues long: ATP-dependent Clp protease proteolytic subunit (196 aa).

Serine 99 acts as the Nucleophile in catalysis. Histidine 124 is an active-site residue.

Belongs to the peptidase S14 family. Fourteen ClpP subunits assemble into 2 heptameric rings which stack back to back to give a disk-like structure with a central cavity, resembling the structure of eukaryotic proteasomes.

It is found in the cytoplasm. The enzyme catalyses Hydrolysis of proteins to small peptides in the presence of ATP and magnesium. alpha-casein is the usual test substrate. In the absence of ATP, only oligopeptides shorter than five residues are hydrolyzed (such as succinyl-Leu-Tyr-|-NHMec, and Leu-Tyr-Leu-|-Tyr-Trp, in which cleavage of the -Tyr-|-Leu- and -Tyr-|-Trp bonds also occurs).. Its function is as follows. Cleaves peptides in various proteins in a process that requires ATP hydrolysis. Has a chymotrypsin-like activity. Plays a major role in the degradation of misfolded proteins. The chain is ATP-dependent Clp protease proteolytic subunit from Helicobacter hepaticus (strain ATCC 51449 / 3B1).